Here is a 253-residue protein sequence, read N- to C-terminus: uncharacterized protein (253 aa).

Positions Thr211 to Thr241 are disordered.

This is an uncharacterized protein from Ictalurid herpesvirus 1 (strain Auburn) (IcHV-1).